Consider the following 329-residue polypeptide: VSG expression site-associated protein 221A (329 aa).

The N-terminal stretch at 1-23 (MKVEIVELVVLLFSVTCVDAWLQ) is a signal peptide. N-linked (GlcNAc...) asparagine glycosylation is found at Asn73, Asn294, and Asn308.

Not known but may be related to activation of the variant surface glycoprotein genes. The chain is VSG expression site-associated protein 221A from Trypanosoma brucei brucei.